The sequence spans 189 residues: ATP synthase subunit b 1 (189 aa).

Residues 32–52 (TYFASQLFWLTIAFVILYIAL) form a helical membrane-spanning segment.

This sequence belongs to the ATPase B chain family. In terms of assembly, F-type ATPases have 2 components, F(1) - the catalytic core - and F(0) - the membrane proton channel. F(1) has five subunits: alpha(3), beta(3), gamma(1), delta(1), epsilon(1). F(0) has three main subunits: a(1), b(2) and c(10-14). The alpha and beta chains form an alternating ring which encloses part of the gamma chain. F(1) is attached to F(0) by a central stalk formed by the gamma and epsilon chains, while a peripheral stalk is formed by the delta and b chains.

The protein resides in the cell inner membrane. Its function is as follows. F(1)F(0) ATP synthase produces ATP from ADP in the presence of a proton or sodium gradient. F-type ATPases consist of two structural domains, F(1) containing the extramembraneous catalytic core and F(0) containing the membrane proton channel, linked together by a central stalk and a peripheral stalk. During catalysis, ATP synthesis in the catalytic domain of F(1) is coupled via a rotary mechanism of the central stalk subunits to proton translocation. Functionally, component of the F(0) channel, it forms part of the peripheral stalk, linking F(1) to F(0). This chain is ATP synthase subunit b 1, found in Maricaulis maris (strain MCS10) (Caulobacter maris).